The chain runs to 777 residues: Beta-hexosaminidase (777 aa).

A signal peptide spans 1-18 (MKRLTFGACICCLLSLMA). The N-palmitoyl cysteine moiety is linked to residue Cys-19. Residue Cys-19 is the site of S-diacylglycerol cysteine attachment. Positions 625–766 (APKPGLTIRT…VMIRLKGEEK (142 aa)) constitute a PA14 domain.

Belongs to the glycosyl hydrolase 20 family.

The protein localises to the cell outer membrane. The enzyme catalyses Hydrolysis of terminal non-reducing N-acetyl-D-hexosamine residues in N-acetyl-beta-D-hexosaminides.. This Porphyromonas gingivalis (strain ATCC BAA-308 / W83) protein is Beta-hexosaminidase (nahA).